We begin with the raw amino-acid sequence, 381 residues long: Homoserine O-succinyltransferase (381 aa).

Residues Asn45–Asp360 enclose the AB hydrolase-1 domain. The Nucleophile role is filled by Ser151. Arg221 is a substrate binding site. Catalysis depends on residues Asp321 and His354. Position 355 (Asp355) interacts with substrate.

This sequence belongs to the AB hydrolase superfamily. MetX family. Homodimer.

The protein resides in the cytoplasm. It carries out the reaction L-homoserine + succinyl-CoA = O-succinyl-L-homoserine + CoA. Its pathway is amino-acid biosynthesis; L-methionine biosynthesis via de novo pathway; O-succinyl-L-homoserine from L-homoserine: step 1/1. Transfers a succinyl group from succinyl-CoA to L-homoserine, forming succinyl-L-homoserine. The polypeptide is Homoserine O-succinyltransferase (Paraburkholderia phymatum (strain DSM 17167 / CIP 108236 / LMG 21445 / STM815) (Burkholderia phymatum)).